A 232-amino-acid polypeptide reads, in one-letter code: uncharacterized protein (232 aa).

This is an uncharacterized protein from Aedes vexans (Inland floodwater mosquito).